A 270-amino-acid polypeptide reads, in one-letter code: Tryptophan synthase alpha chain (270 aa).

Residues Glu57 and Asp68 each act as proton acceptor in the active site.

The protein belongs to the TrpA family. In terms of assembly, tetramer of two alpha and two beta chains.

The enzyme catalyses (1S,2R)-1-C-(indol-3-yl)glycerol 3-phosphate + L-serine = D-glyceraldehyde 3-phosphate + L-tryptophan + H2O. Its pathway is amino-acid biosynthesis; L-tryptophan biosynthesis; L-tryptophan from chorismate: step 5/5. Its function is as follows. The alpha subunit is responsible for the aldol cleavage of indoleglycerol phosphate to indole and glyceraldehyde 3-phosphate. The protein is Tryptophan synthase alpha chain of Mycobacterium leprae (strain Br4923).